The chain runs to 419 residues: Mitogen-activated protein kinase pmk-2 (419 aa).

The Protein kinase domain occupies Tyr49–Leu350. Residues Leu55 to Val63 and Lys78 each bind ATP. The Proton acceptor role is filled by Asp210. Thr222 is subject to Phosphothreonine. Residues Thr222–Tyr224 carry the TXY motif. At Tyr224 the chain carries Phosphotyrosine.

This sequence belongs to the protein kinase superfamily. CMGC Ser/Thr protein kinase family. MAP kinase subfamily. The cofactor is Mg(2+). Post-translationally, dually phosphorylated on Thr-222 and Tyr-224, which activates the enzyme.

It localises to the cytoplasm. The catalysed reaction is L-seryl-[protein] + ATP = O-phospho-L-seryl-[protein] + ADP + H(+). It carries out the reaction L-threonyl-[protein] + ATP = O-phospho-L-threonyl-[protein] + ADP + H(+). Activated by phosphorylation on threonine and tyrosine. Inhibited by pyridinyl-imidazole related compounds. Responds to activation by environmental stress and pro-inflammatory cytokines by phosphorylating downstream targets. The polypeptide is Mitogen-activated protein kinase pmk-2 (pmk-2) (Caenorhabditis elegans).